An 800-amino-acid chain; its full sequence is DNA topoisomerase 4 subunit A (800 aa).

The region spanning 31-495 is the Topo IIA-type catalytic domain; the sequence is LPDVRDGLKP…EIEEIKIDKE (465 aa). Residue Y119 is the O-(5'-phospho-DNA)-tyrosine intermediate of the active site.

This sequence belongs to the type II topoisomerase GyrA/ParC subunit family. ParC type 2 subfamily. In terms of assembly, heterotetramer composed of ParC and ParE.

Its subcellular location is the cell membrane. It catalyses the reaction ATP-dependent breakage, passage and rejoining of double-stranded DNA.. Its function is as follows. Topoisomerase IV is essential for chromosome segregation. It relaxes supercoiled DNA. Performs the decatenation events required during the replication of a circular DNA molecule. This Staphylococcus aureus protein is DNA topoisomerase 4 subunit A.